Here is a 738-residue protein sequence, read N- to C-terminus: 130 kDa Glycoprotein O (738 aa).

The first 23 residues, 1-23 (MLHISRLGLFLALFAIVMHSVNL), serve as a signal peptide directing secretion. Residues Asn41, Asn64, Asn114, Asn175, Asn190, Asn201, and Asn221 are each glycosylated (N-linked (GlcNAc...) asparagine; by host). Residues 240–263 (TPSSTPSSTSASITSPHIPSTNTP) are compositionally biased toward low complexity. A disordered region spans residues 240–272 (TPSSTPSSTSASITSPHIPSTNTPTPEPSPVTK). N-linked (GlcNAc...) asparagine; by host glycosylation is found at Asn273 and Asn326. The segment covering 330 to 342 (KTEQNTENPTENP) has biased composition (polar residues). The segment at 330 to 351 (KTEQNTENPTENPKSPPKPTNF) is disordered. N-linked (GlcNAc...) asparagine; by host glycans are attached at residues Asn353, Asn370, Asn445, Asn477, Asn483, Asn529, Asn547, Asn573, Asn629, Asn646, and Asn689. Over residues 541–554 (NALPSSNSSHSITK) the composition is skewed to polar residues. The interval 541–568 (NALPSSNSSHSITKVTEEPKQNRMSAST) is disordered. The disordered stretch occupies residues 667–712 (PQTITERSTDVKKKSSTESREANKTLPGNDYRVTDKNSHNHPDNLT). Basic and acidic residues-rich tracts occupy residues 673–689 (RSTD…REAN) and 698–708 (RVTDKNSHNHP). Residues Asn710, Asn720, and Asn733 are each glycosylated (N-linked (GlcNAc...) asparagine; by host).

The protein belongs to the herpesviridae U47 family. Part of a gH-gL-gO complex. In terms of processing, 120 kDa Glycoprotein O: A shorter mature protein, gO-80K, is produced probably by proteolytic cleavage. Post-translationally, 120 kDa Glycoprotein O: Modified with high mannose-oligosaccharides. N-glycosylated with complex glycans.

The protein localises to the virion. The protein resides in the host cell membrane. The sequence is that of 130 kDa Glycoprotein O (U47) from Human herpesvirus 6B (strain Z29) (HHV-6 variant B).